We begin with the raw amino-acid sequence, 91 residues long: MIAKHLILSGRVQGVGFRDWMVTRARRLALAGWVRNRADGTLEALVAGDAPAVEELLRACRRGPPLADVTDIVETFAEPPAEPGFVKRATG.

The Acylphosphatase-like domain maps to 3-89; the sequence is AKHLILSGRV…PAEPGFVKRA (87 aa). Catalysis depends on residues arginine 18 and asparagine 36.

This sequence belongs to the acylphosphatase family.

It catalyses the reaction an acyl phosphate + H2O = a carboxylate + phosphate + H(+). This Acidiphilium cryptum (strain JF-5) protein is Acylphosphatase (acyP).